Here is a 227-residue protein sequence, read N- to C-terminus: Translation initiation factor 6 (227 aa).

This sequence belongs to the eIF-6 family.

Binds to the 50S ribosomal subunit and prevents its association with the 30S ribosomal subunit to form the 70S initiation complex. This is Translation initiation factor 6 from Methanococcus maripaludis (strain DSM 14266 / JCM 13030 / NBRC 101832 / S2 / LL).